The chain runs to 92 residues: Small ribosomal subunit protein uS19c (92 aa).

Belongs to the universal ribosomal protein uS19 family.

Its subcellular location is the plastid. The protein resides in the chloroplast. Functionally, protein S19 forms a complex with S13 that binds strongly to the 16S ribosomal RNA. This is Small ribosomal subunit protein uS19c from Coffea arabica (Arabian coffee).